The chain runs to 178 residues: HTH-type transcriptional regulator SutR (178 aa).

Residues 12–66 enclose the HTH cro/C1-type domain; that stretch reads LKQLRQQRGWSLSRLAEATGVSKAMLGQIERNESSPTVATLWKIATGLNVPFSTF. The H-T-H motif DNA-binding region spans 23-42; it reads LSRLAEATGVSKAMLGQIER. A Cupin type-2 domain is found at 105 to 171; the sequence is QMASGAISES…GGEQTVHFHS (67 aa).

Functionally, regulates the expression of 12-16 transcription units involved in various steps of sulfur utilization. Represses expression of pfkB, fliZ, cysE, ydcO and its own expression. Activates expression of ypfN. Acts by binding to SutR boxes. This chain is HTH-type transcriptional regulator SutR, found in Escherichia coli (strain K12).